A 246-amino-acid polypeptide reads, in one-letter code: UDP-N-acetyl-D-mannosaminuronic acid transferase (246 aa).

The protein belongs to the glycosyltransferase 26 family.

It catalyses the reaction UDP-N-acetyl-alpha-D-mannosaminouronate + N-acetyl-alpha-D-glucosaminyl-di-trans,octa-cis-undecaprenyl diphosphate = beta-D-ManNAcA-(1-&gt;4)-alpha-D-GlcNAc-di-trans,octa-cis-undecaprenyl diphosphate + UDP + H(+). It participates in bacterial outer membrane biogenesis; enterobacterial common antigen biosynthesis. In terms of biological role, catalyzes the synthesis of Und-PP-GlcNAc-ManNAcA (Lipid II), the second lipid-linked intermediate involved in enterobacterial common antigen (ECA) synthesis. In Salmonella paratyphi A (strain ATCC 9150 / SARB42), this protein is UDP-N-acetyl-D-mannosaminuronic acid transferase.